The following is a 298-amino-acid chain: Glycine--tRNA ligase alpha subunit (298 aa).

This sequence belongs to the class-II aminoacyl-tRNA synthetase family. As to quaternary structure, tetramer of two alpha and two beta subunits.

It is found in the cytoplasm. It catalyses the reaction tRNA(Gly) + glycine + ATP = glycyl-tRNA(Gly) + AMP + diphosphate. This is Glycine--tRNA ligase alpha subunit (glyQ) from Helicobacter pylori (strain J99 / ATCC 700824) (Campylobacter pylori J99).